We begin with the raw amino-acid sequence, 295 residues long: Nicotinate-nucleotide pyrophosphorylase [carboxylating] (295 aa).

Substrate contacts are provided by residues arginine 107, 142–144 (TRK), arginine 166, lysine 176, glutamate 206, aspartate 227, and 256–258 (SGG).

It belongs to the NadC/ModD family. Hexamer formed by 3 homodimers.

It localises to the cytoplasm. Its subcellular location is the nucleus. It carries out the reaction nicotinate beta-D-ribonucleotide + CO2 + diphosphate = quinolinate + 5-phospho-alpha-D-ribose 1-diphosphate + 2 H(+). Its pathway is cofactor biosynthesis; NAD(+) biosynthesis; nicotinate D-ribonucleotide from quinolinate: step 1/1. In terms of biological role, involved in the catabolism of quinolinic acid (QA). The chain is Nicotinate-nucleotide pyrophosphorylase [carboxylating] (BNA6) from Saccharomyces cerevisiae (strain ATCC 204508 / S288c) (Baker's yeast).